Consider the following 915-residue polypeptide: Kinesin-like protein KIN-10A (915 aa).

A compositionally biased stretch (pro residues) spans 1–16 (MAPPTPSPRPGPPPTP). Disordered stretches follow at residues 1–28 (MAPP…KTPA) and 34–53 (HFPA…AGGT). The region spanning 56–391 (PVEVIGRIRN…LEYGAKAKCI (336 aa)) is the Kinesin motor domain. 137–144 (GPTGSGKS) lines the ATP pocket. The stretch at 426–517 (NLQKENKLRE…QRLKEVEREK (92 aa)) forms a coiled coil. The interval 676–718 (PAKKAFGDENNEPAKQTFGDENKQQPAKRVFGDENKDPSAWGA) is disordered.

This sequence belongs to the TRAFAC class myosin-kinesin ATPase superfamily. Kinesin family. KIN-10 subfamily.

This Oryza sativa subsp. japonica (Rice) protein is Kinesin-like protein KIN-10A.